A 114-amino-acid polypeptide reads, in one-letter code: Small ribosomal subunit protein uS14m (114 aa).

It belongs to the universal ribosomal protein uS14 family.

It is found in the mitochondrion. This is Small ribosomal subunit protein uS14m (MRP2) from Eremothecium gossypii (strain ATCC 10895 / CBS 109.51 / FGSC 9923 / NRRL Y-1056) (Yeast).